The primary structure comprises 152 residues: Deoxyuridine 5'-triphosphate nucleotidohydrolase (152 aa).

Substrate contacts are provided by residues 71–73 (RSG), Asn84, 88–90 (LID), and Met98.

It belongs to the dUTPase family. Mg(2+) serves as cofactor.

It catalyses the reaction dUTP + H2O = dUMP + diphosphate + H(+). It functions in the pathway pyrimidine metabolism; dUMP biosynthesis; dUMP from dCTP (dUTP route): step 2/2. Functionally, this enzyme is involved in nucleotide metabolism: it produces dUMP, the immediate precursor of thymidine nucleotides and it decreases the intracellular concentration of dUTP so that uracil cannot be incorporated into DNA. This is Deoxyuridine 5'-triphosphate nucleotidohydrolase from Shewanella baltica (strain OS155 / ATCC BAA-1091).